The chain runs to 626 residues: Chaperone protein HtpG (626 aa).

Residues 1 to 341 (METKQFKAES…SEDLSLNISR (341 aa)) form an a; substrate-binding region. The b stretch occupies residues 342-552 (EILQHDRQLK…EGELSIEMEK (211 aa)). The disordered stretch occupies residues 490 to 509 (DLGIEGEEKENTSSSDDKEN). The span at 498-509 (KENTSSSDDKEN) shows a compositional bias: basic and acidic residues. Residues 553 to 626 (VLNAMPNNQN…FTNNICKIMK (74 aa)) are c.

Belongs to the heat shock protein 90 family. As to quaternary structure, homodimer.

It is found in the cytoplasm. Molecular chaperone. Has ATPase activity. The chain is Chaperone protein HtpG from Clostridium botulinum (strain Loch Maree / Type A3).